The chain runs to 198 residues: Peroxiredoxin-2F, mitochondrial (198 aa).

The transit peptide at M1–L27 directs the protein to the mitochondrion. The 165-residue stretch at S34 to I198 folds into the Thioredoxin domain. The active-site Cysteine sulfenic acid (-SOH) intermediate is C86.

The protein belongs to the peroxiredoxin family. Prx5 subfamily. In terms of assembly, monomer.

It is found in the mitochondrion matrix. The enzyme catalyses [glutaredoxin]-dithiol + a hydroperoxide = [glutaredoxin]-disulfide + an alcohol + H2O. Its function is as follows. Thiol-specific peroxidase that catalyzes the reduction of hydrogen peroxide and organic hydroperoxides to water and alcohols, respectively. Plays a role in cell protection against oxidative stress by detoxifying peroxides. Reduces preferentially hydrogen peroxide rather than alkyl peroxides. May be involved in mitochondrial redox homeostasis. The chain is Peroxiredoxin-2F, mitochondrial (PRXIIF) from Oryza sativa subsp. japonica (Rice).